The sequence spans 351 residues: MMEFLMVFIISTVSAAVFTLFIRNILRSADIGDKPIVTEHSHKAGTPTMGGLGMLLALLLVTVLYRNNPYLVLTSLIVLTAAIVGLLDDLLGLKVKEVQRIIRNVSEGPLEVGQLVLKPGEEARAATDKAKRDVEALLSEGLVEVVGEAPIKNEVSEGEKILAQLLIGVFLVLSGAVGKLGGFYLGLAAAPIAIAGMVGAINAVNLIDGMDGMAAGIMLIASLSCAIFLGLSGQALPFLALAGMCAGFLVFNRHPASIFMGDTGSFALGAGYATAVMLTDTVYFGVLAIAVPVVSVIVSLLHRAGVIRLPVEPLHHTLHYRGMSERRIVLLYWLITLIVCALGLYMTGSIL.

10 helical membrane-spanning segments follow: residues 2-22, 44-64, 71-91, 158-178, 181-201, 212-232, 235-255, 258-278, 281-301, and 328-348; these read MEFL…TLFI, AGTP…VTVL, LVLT…DDLL, GEKI…GAVG, GGFY…VGAI, GMAA…LGLS, ALPF…NRHP, IFMG…AVML, TVYF…VSLL, and IVLL…YMTG.

This sequence belongs to the glycosyltransferase 4 family. MraY subfamily. Requires Mg(2+) as cofactor.

The protein resides in the cell membrane. It carries out the reaction UDP-N-acetyl-alpha-D-muramoyl-L-alanyl-gamma-D-glutamyl-meso-2,6-diaminopimeloyl-D-alanyl-D-alanine + di-trans,octa-cis-undecaprenyl phosphate = di-trans,octa-cis-undecaprenyl diphospho-N-acetyl-alpha-D-muramoyl-L-alanyl-D-glutamyl-meso-2,6-diaminopimeloyl-D-alanyl-D-alanine + UMP. The protein is Putative phospho-N-acetylmuramoyl-pentapeptide-transferase of Methanothermobacter thermautotrophicus (strain ATCC 29096 / DSM 1053 / JCM 10044 / NBRC 100330 / Delta H) (Methanobacterium thermoautotrophicum).